The primary structure comprises 298 residues: Ribosomal RNA processing protein 36 homolog (298 aa).

The segment at 1-131 (MKPDIIKKRR…SDAPVEMTAM (131 aa)) is disordered. Acidic residues predominate over residues 14-56 (SDDEDEYNEEDEMYEDDNNNYEEDEDDDDDDDEDDEDDDENEE). 2 stretches are compositionally biased toward polar residues: residues 61–70 (QQLSNVSFSS) and 83–92 (LNLNTITKNL). Coiled-coil stretches lie at residues 88–112 (ITKNLQQQKSFKKEEQQEKEEMNSK) and 196–228 (RERDQLYKKIQSKKSQLKTQQLKDQKRETKNKL). Residues 98-111 (FKKEEQQEKEEMNS) show a composition bias toward basic and acidic residues. Residues 279 to 298 (ISSKEKTFLPQRRSFDQDEN) form a disordered region.

It belongs to the RRP36 family.

The protein resides in the nucleus. The protein localises to the nucleolus. Its function is as follows. Involved in the early processing steps of the pre-rRNA in the maturation pathway leading to the 18S rRNA. This chain is Ribosomal RNA processing protein 36 homolog, found in Dictyostelium discoideum (Social amoeba).